A 119-amino-acid polypeptide reads, in one-letter code: V-type proton ATPase subunit F (119 aa).

Belongs to the V-ATPase F subunit family. V-ATPase is a heteromultimeric enzyme composed of a peripheral catalytic V1 complex (components A to H) attached to an integral membrane V0 proton pore complex (components: a, c, c', c'', d, e, f and VOA1).

Its subcellular location is the vacuole membrane. In terms of biological role, subunit of the V1 complex of vacuolar(H+)-ATPase (V-ATPase), a multisubunit enzyme composed of a peripheral complex (V1) that hydrolyzes ATP and a membrane integral complex (V0) that translocates protons. V-ATPase is responsible for acidifying and maintaining the pH of intracellular compartments. The polypeptide is V-type proton ATPase subunit F (VMA7) (Vanderwaltozyma polyspora (strain ATCC 22028 / DSM 70294 / BCRC 21397 / CBS 2163 / NBRC 10782 / NRRL Y-8283 / UCD 57-17) (Kluyveromyces polysporus)).